Consider the following 417-residue polypeptide: NADH-quinone oxidoreductase subunit D (417 aa).

Belongs to the complex I 49 kDa subunit family. As to quaternary structure, NDH-1 is composed of 14 different subunits. Subunits NuoB, C, D, E, F, and G constitute the peripheral sector of the complex.

The protein resides in the cell inner membrane. It carries out the reaction a quinone + NADH + 5 H(+)(in) = a quinol + NAD(+) + 4 H(+)(out). Its function is as follows. NDH-1 shuttles electrons from NADH, via FMN and iron-sulfur (Fe-S) centers, to quinones in the respiratory chain. The immediate electron acceptor for the enzyme in this species is believed to be ubiquinone. Couples the redox reaction to proton translocation (for every two electrons transferred, four hydrogen ions are translocated across the cytoplasmic membrane), and thus conserves the redox energy in a proton gradient. The polypeptide is NADH-quinone oxidoreductase subunit D (Burkholderia ambifaria (strain ATCC BAA-244 / DSM 16087 / CCUG 44356 / LMG 19182 / AMMD) (Burkholderia cepacia (strain AMMD))).